Here is a 108-residue protein sequence, read N- to C-terminus: DNA-binding protein HBbu (108 aa).

This sequence belongs to the bacterial histone-like protein family.

Functionally, histone-like DNA-binding protein which is capable of wrapping DNA to stabilize it, and thus to prevent its denaturation under extreme environmental conditions. The chain is DNA-binding protein HBbu (hbb) from Borrelia andersonii (Borreliella andersonii).